The sequence spans 130 residues: Small ribosomal subunit protein uS11 (130 aa).

This sequence belongs to the universal ribosomal protein uS11 family. Part of the 30S ribosomal subunit. Interacts with proteins S7 and S18. Binds to IF-3.

Its function is as follows. Located on the platform of the 30S subunit, it bridges several disparate RNA helices of the 16S rRNA. Forms part of the Shine-Dalgarno cleft in the 70S ribosome. The sequence is that of Small ribosomal subunit protein uS11 from Nitratiruptor sp. (strain SB155-2).